Here is a 435-residue protein sequence, read N- to C-terminus: Light-independent protochlorophyllide reductase subunit N (435 aa).

[4Fe-4S] cluster is bound by residues Cys-23, Cys-48, and Cys-108.

It belongs to the BchN/ChlN family. Protochlorophyllide reductase is composed of three subunits; ChlL, ChlN and ChlB. Forms a heterotetramer of two ChlB and two ChlN subunits. The cofactor is [4Fe-4S] cluster.

It localises to the plastid. It is found in the chloroplast. It catalyses the reaction chlorophyllide a + oxidized 2[4Fe-4S]-[ferredoxin] + 2 ADP + 2 phosphate = protochlorophyllide a + reduced 2[4Fe-4S]-[ferredoxin] + 2 ATP + 2 H2O. The protein operates within porphyrin-containing compound metabolism; chlorophyll biosynthesis (light-independent). Functionally, component of the dark-operative protochlorophyllide reductase (DPOR) that uses Mg-ATP and reduced ferredoxin to reduce ring D of protochlorophyllide (Pchlide) to form chlorophyllide a (Chlide). This reaction is light-independent. The NB-protein (ChlN-ChlB) is the catalytic component of the complex. This is Light-independent protochlorophyllide reductase subunit N from Chlorella vulgaris (Green alga).